The chain runs to 101 residues: Large ribosomal subunit protein uL24 (101 aa).

Belongs to the universal ribosomal protein uL24 family. As to quaternary structure, part of the 50S ribosomal subunit.

One of two assembly initiator proteins, it binds directly to the 5'-end of the 23S rRNA, where it nucleates assembly of the 50S subunit. In terms of biological role, one of the proteins that surrounds the polypeptide exit tunnel on the outside of the subunit. The protein is Large ribosomal subunit protein uL24 of Streptococcus uberis (strain ATCC BAA-854 / 0140J).